An 880-amino-acid chain; its full sequence is Tyrosine-protein kinase receptor TYRO3 (880 aa).

The first 30 residues, 1-30 (MALRRSMGWPGLRPLLLAGLASLLLPGSAA), serve as a signal peptide directing secretion. Ig-like C2-type domains lie at 31 to 118 (AGLK…TKIS) and 129 to 209 (PFFT…PAIV). At 31 to 419 (AGLKLMGAPV…QGPPHSRTSW (389 aa)) the chain is on the extracellular side. Asn-53, Asn-75, Asn-181, Asn-220, Asn-230, Asn-283, Asn-356, and Asn-370 each carry an N-linked (GlcNAc...) asparagine glycan. Intrachain disulfides connect Cys-54-Cys-107 and Cys-150-Cys-193. Fibronectin type-III domains are found at residues 217–310 (APFN…TKGL) and 315–406 (APQN…SHDH). A helical transmembrane segment spans residues 420–440 (VPVVLGVLTALITAAALALIL). The Cytoplasmic portion of the chain corresponds to 441-880 (LRKRRKETRF…QQGLLPHSSC (440 aa)). Ser-456 is modified (phosphoserine). In terms of domain architecture, Protein kinase spans 508–785 (FTLGRMLGKG…LENILGHLSV (278 aa)). ATP contacts are provided by residues 514–522 (LGKGEFGSV) and Lys-540. Residue Asp-645 is the Proton acceptor of the active site. 4 positions are modified to phosphotyrosine; by autocatalysis: Tyr-671, Tyr-675, Tyr-676, and Tyr-794. A disordered region spans residues 800-864 (AEQPTESGSP…QQPESPLNEN (65 aa)). A phosphoserine mark is found at Ser-808 and Ser-859. Over residues 849–864 (SPGQLEQQPESPLNEN) the composition is skewed to polar residues.

Belongs to the protein kinase superfamily. Tyr protein kinase family. AXL/UFO subfamily. In terms of assembly, monomer and homodimer. Interacts (via N-terminus) with extracellular ligands TULP1 and GAS6. Interacts with PIK3R1; this interaction increases PI3-kinase activity. Post-translationally, autophosphorylated. As to expression, abundant in the brain and lower levels in other tissues.

The protein resides in the cell membrane. It carries out the reaction L-tyrosyl-[protein] + ATP = O-phospho-L-tyrosyl-[protein] + ADP + H(+). Its function is as follows. Receptor tyrosine kinase that transduces signals from the extracellular matrix into the cytoplasm by binding to several ligands including TULP1 or GAS6. Regulates many physiological processes including cell survival, migration and differentiation. Ligand binding at the cell surface induces dimerization and autophosphorylation of TYRO3 on its intracellular domain that provides docking sites for downstream signaling molecules. Following activation by ligand, interacts with PIK3R1 and thereby enhances PI3-kinase activity. Activates the AKT survival pathway, including nuclear translocation of NF-kappa-B and up-regulation of transcription of NF-kappa-B-regulated genes. TYRO3 signaling plays a role in various processes such as neuron protection from excitotoxic injury, platelet aggregation and cytoskeleton reorganization. Also plays an important role in inhibition of Toll-like receptors (TLRs)-mediated innate immune response by activating STAT1, which selectively induces production of suppressors of cytokine signaling SOCS1 and SOCS3. The protein is Tyrosine-protein kinase receptor TYRO3 (Tyro3) of Mus musculus (Mouse).